A 577-amino-acid chain; its full sequence is Arginine--tRNA ligase (577 aa).

Residues 123 to 133 carry the 'HIGH' region motif; it reads PNLAKEMHVGH.

This sequence belongs to the class-I aminoacyl-tRNA synthetase family. As to quaternary structure, monomer.

It localises to the cytoplasm. It carries out the reaction tRNA(Arg) + L-arginine + ATP = L-arginyl-tRNA(Arg) + AMP + diphosphate. This Marinomonas sp. (strain MWYL1) protein is Arginine--tRNA ligase.